The following is a 119-amino-acid chain: uncharacterized protein (119 aa).

This is an uncharacterized protein from Bos taurus (Bovine).